The sequence spans 444 residues: Forkhead box protein F2 (444 aa).

The tract at residues 32 to 98 (PAAAAAAAAA…KKASSGLRRP (67 aa)) is disordered. Residues 34–75 (AAAAAAAAPETTSSSSSSSSASCASSSSSSNSASAPSAACKS) show a composition bias toward low complexity. The span at 76 to 87 (AGGGGAGAGSGG) shows a compositional bias: gly residues. The fork-head DNA-binding region spans 99–190 (EKPPYSYIAL…EFMFEEGSFR (92 aa)). Disordered regions lie at residues 256 to 323 (GAGA…SPAM) and 338 to 367 (AHWS…SAGL). The span at 263–274 (AHPHHHHHHHVP) shows a compositional bias: basic residues. Residues 293–308 (GPGGVGAAGGGGGGDY) are compositionally biased toward gly residues. Low complexity predominate over residues 309-323 (GPDSSSSPVPSSPAM).

Interacts with the transcription factors TBP and TFIIB. As to expression, lung and placenta. Predominantly expressed in gastrointestinal tract including stomach.

The protein localises to the nucleus. Functionally, probable transcription activator for a number of lung-specific genes. Mediates up-regulation of the E3 ligase IRF2BPL and drives ubiquitination and degradation of CTNNB1. The chain is Forkhead box protein F2 (FOXF2) from Homo sapiens (Human).